The following is a 661-amino-acid chain: UvrABC system protein B (661 aa).

Residues 24–209 (NGLNKGYRFQ…IFPSYQDEGI (186 aa)) enclose the Helicase ATP-binding domain. Residue 37-44 (GVTGSGKT) coordinates ATP. The short motif at 90–113 (YYDYYQPEAYVPTKDLYIEKSADI) is the Beta-hairpin element. Residues 430-594 (DLVNEIVQVK…IIKPLMEDIF (165 aa)) form the Helicase C-terminal domain. A UVR domain is found at 622 to 657 (EEYAALLEEEMYKAASELRYEDAARLRDELFKIKEE).

The protein belongs to the UvrB family. As to quaternary structure, forms a heterotetramer with UvrA during the search for lesions. Interacts with UvrC in an incision complex.

It is found in the cytoplasm. Its function is as follows. The UvrABC repair system catalyzes the recognition and processing of DNA lesions. A damage recognition complex composed of 2 UvrA and 2 UvrB subunits scans DNA for abnormalities. Upon binding of the UvrA(2)B(2) complex to a putative damaged site, the DNA wraps around one UvrB monomer. DNA wrap is dependent on ATP binding by UvrB and probably causes local melting of the DNA helix, facilitating insertion of UvrB beta-hairpin between the DNA strands. Then UvrB probes one DNA strand for the presence of a lesion. If a lesion is found the UvrA subunits dissociate and the UvrB-DNA preincision complex is formed. This complex is subsequently bound by UvrC and the second UvrB is released. If no lesion is found, the DNA wraps around the other UvrB subunit that will check the other stand for damage. This chain is UvrABC system protein B, found in Fervidobacterium nodosum (strain ATCC 35602 / DSM 5306 / Rt17-B1).